Here is a 60-residue protein sequence, read N- to C-terminus: MAKHPVPKKKTSKARRDARRSHHALTPPILVPCPECKAMKPPHTVCPECGYYAGRKVLEV.

Residues 1-23 are compositionally biased toward basic residues; that stretch reads MAKHPVPKKKTSKARRDARRSHH. A disordered region spans residues 1 to 28; sequence MAKHPVPKKKTSKARRDARRSHHALTPP.

It belongs to the bacterial ribosomal protein bL32 family. As to quaternary structure, part of the 50S ribosomal subunit.

Found on the solvent side of the large subunit. This is Large ribosomal subunit protein bL32 (rpmF) from Thermus thermophilus (strain ATCC BAA-163 / DSM 7039 / HB27).